Consider the following 423-residue polypeptide: Acetylornithine aminotransferase, mitochondrial (423 aa).

N6-(pyridoxal phosphate)lysine is present on lysine 276.

Belongs to the class-III pyridoxal-phosphate-dependent aminotransferase family. Pyridoxal 5'-phosphate serves as cofactor.

The protein localises to the mitochondrion matrix. The catalysed reaction is N(2)-acetyl-L-ornithine + 2-oxoglutarate = N-acetyl-L-glutamate 5-semialdehyde + L-glutamate. It participates in amino-acid biosynthesis; L-arginine biosynthesis; N(2)-acetyl-L-ornithine from L-glutamate: step 4/4. The polypeptide is Acetylornithine aminotransferase, mitochondrial (ARG8) (Eremothecium gossypii (strain ATCC 10895 / CBS 109.51 / FGSC 9923 / NRRL Y-1056) (Yeast)).